The chain runs to 383 residues: Succinyl-diaminopimelate desuccinylase (383 aa).

His73 lines the Zn(2+) pocket. Asp75 is a catalytic residue. Position 107 (Asp107) interacts with Zn(2+). Catalysis depends on Glu141, which acts as the Proton acceptor. Positions 142, 170, and 356 each coordinate Zn(2+).

The protein belongs to the peptidase M20A family. DapE subfamily. Homodimer. Zn(2+) is required as a cofactor. Co(2+) serves as cofactor.

It catalyses the reaction N-succinyl-(2S,6S)-2,6-diaminopimelate + H2O = (2S,6S)-2,6-diaminopimelate + succinate. Its pathway is amino-acid biosynthesis; L-lysine biosynthesis via DAP pathway; LL-2,6-diaminopimelate from (S)-tetrahydrodipicolinate (succinylase route): step 3/3. Functionally, catalyzes the hydrolysis of N-succinyl-L,L-diaminopimelic acid (SDAP), forming succinate and LL-2,6-diaminopimelate (DAP), an intermediate involved in the bacterial biosynthesis of lysine and meso-diaminopimelic acid, an essential component of bacterial cell walls. The protein is Succinyl-diaminopimelate desuccinylase of Pseudomonas paraeruginosa (strain DSM 24068 / PA7) (Pseudomonas aeruginosa (strain PA7)).